The primary structure comprises 94 residues: Co-chaperonin GroES (94 aa).

This sequence belongs to the GroES chaperonin family. In terms of assembly, heptamer of 7 subunits arranged in a ring. Interacts with the chaperonin GroEL.

It localises to the cytoplasm. Functionally, together with the chaperonin GroEL, plays an essential role in assisting protein folding. The GroEL-GroES system forms a nano-cage that allows encapsulation of the non-native substrate proteins and provides a physical environment optimized to promote and accelerate protein folding. GroES binds to the apical surface of the GroEL ring, thereby capping the opening of the GroEL channel. The protein is Co-chaperonin GroES of Streptococcus pneumoniae (strain ATCC 700669 / Spain 23F-1).